The sequence spans 343 residues: UDP-3-O-(3-hydroxymyristoyl)glucosamine N-acyltransferase (343 aa).

The active-site Proton acceptor is H239.

This sequence belongs to the transferase hexapeptide repeat family. LpxD subfamily. As to quaternary structure, homotrimer.

The enzyme catalyses a UDP-3-O-[(3R)-3-hydroxyacyl]-alpha-D-glucosamine + a (3R)-hydroxyacyl-[ACP] = a UDP-2-N,3-O-bis[(3R)-3-hydroxyacyl]-alpha-D-glucosamine + holo-[ACP] + H(+). It carries out the reaction UDP-3-O-[(3R)-3-hydroxytetradecanoyl]-alpha-D-glucosamine + (3R)-hydroxytetradecanoyl-[ACP] = UDP-2-N,3-O-bis[(3R)-3-hydroxytetradecanoyl]-alpha-D-glucosamine + holo-[ACP] + H(+). Its pathway is glycolipid biosynthesis; lipid IV(A) biosynthesis; lipid IV(A) from (3R)-3-hydroxytetradecanoyl-[acyl-carrier-protein] and UDP-N-acetyl-alpha-D-glucosamine: step 3/6. Its function is as follows. Catalyzes the N-acylation of UDP-3-O-(hydroxytetradecanoyl)glucosamine using 3-hydroxytetradecanoyl-ACP as the acyl donor. Is involved in the biosynthesis of lipid A, a phosphorylated glycolipid that anchors the lipopolysaccharide to the outer membrane of the cell. This is UDP-3-O-(3-hydroxymyristoyl)glucosamine N-acyltransferase from Blochmanniella pennsylvanica (strain BPEN).